The primary structure comprises 296 residues: Indole-3-glycerol phosphate synthase (296 aa).

It belongs to the TrpC family.

The catalysed reaction is 1-(2-carboxyphenylamino)-1-deoxy-D-ribulose 5-phosphate + H(+) = (1S,2R)-1-C-(indol-3-yl)glycerol 3-phosphate + CO2 + H2O. Its pathway is amino-acid biosynthesis; L-tryptophan biosynthesis; L-tryptophan from chorismate: step 4/5. The protein is Indole-3-glycerol phosphate synthase of Microcystis aeruginosa (strain NIES-843 / IAM M-2473).